Here is a 212-residue protein sequence, read N- to C-terminus: 3-isopropylmalate dehydratase small subunit (212 aa).

The protein belongs to the LeuD family. LeuD type 1 subfamily. Heterodimer of LeuC and LeuD.

It catalyses the reaction (2R,3S)-3-isopropylmalate = (2S)-2-isopropylmalate. The protein operates within amino-acid biosynthesis; L-leucine biosynthesis; L-leucine from 3-methyl-2-oxobutanoate: step 2/4. Its function is as follows. Catalyzes the isomerization between 2-isopropylmalate and 3-isopropylmalate, via the formation of 2-isopropylmaleate. This chain is 3-isopropylmalate dehydratase small subunit, found in Methylococcus capsulatus (strain ATCC 33009 / NCIMB 11132 / Bath).